Here is a 99-residue protein sequence, read N- to C-terminus: Large ribosomal subunit protein eL30 (99 aa).

This sequence belongs to the eukaryotic ribosomal protein eL30 family.

In Methanobrevibacter smithii (strain ATCC 35061 / DSM 861 / OCM 144 / PS), this protein is Large ribosomal subunit protein eL30.